The sequence spans 901 residues: Phosphatidylinositol 3-kinase catalytic subunit type 3 (901 aa).

The C2 PI3K-type domain maps to 21–189; the sequence is LQTNVQVKVA…DLLFKQVTRQ (169 aa). One can recognise a PIK helical domain in the interval 302-527; it reads RHRQVKPNKQ…SKMYQNIQDR (226 aa). Residues 607–886 form the PI3K/PI4K catalytic domain; it reads IPDTASFFKS…QIESSLNAKM (280 aa). The tract at residues 613 to 619 is G-loop; that stretch reads FFKSEMM. Residues 755-763 are catalytic loop; it reads GLGDRHLDN. The tract at residues 774–795 is activation loop; the sequence is HVDFGFILGRDPKPMPPPMKLT.

It belongs to the PI3/PI4-kinase family. As to quaternary structure, interacts with bec-1. May interact with dyn-1. Mn(2+) serves as cofactor. In terms of tissue distribution, ubiquitous.

Its subcellular location is the nucleus outer membrane. It is found in the cytoplasm. It localises to the cytoplasmic granule. The protein resides in the cell projection. The protein localises to the phagocytic cup. The enzyme catalyses a 1,2-diacyl-sn-glycero-3-phospho-(1D-myo-inositol) + ATP = a 1,2-diacyl-sn-glycero-3-phospho-(1D-myo-inositol-3-phosphate) + ADP + H(+). With respect to regulation, inhibited by wortmannin. In terms of biological role, catalytic subunit of the PI3K complex that mediates formation of phosphatidylinositol 3-phosphate. Together with bec-1, mediates the production of phosphatidylinositol 3-phosphate on intracellular vesicles and thereby regulates membrane trafficking. Plays a role in endosome-to-Golgi retrograde transport of mig-14. Involved in clearance of apoptotic cell corpses by phagosomes. Phagosome maturation requires two sequential and non-overlapping pulses of phosphatidylinositol-3-phosphate (PI3P) on the vesicle surface which mediates recruitment of sortins snx-1 and lst-4 and small GTPases rab-5, rab-2 and rab-7, downstream of dynamin dyn-1. The first pulse is initiated by piki-1, then maintained by vps-34 which also produces the second pulse. Required for embryonic development. Together with bec-1, involved in L3/L4 larval molting stage probably by regulating cuticle shedding. Regulates the expansion of the nucleus outer membrane. Involved in the secretion and localization of lrp-1 at the apical surface of hyp7 syncytium. May regulate endocytosis in hypodermal cells. May play a role in the formation of gut granules (a lysosome-related organelle). Plays a role in germ stem cell proliferation during larval development. The protein is Phosphatidylinositol 3-kinase catalytic subunit type 3 of Caenorhabditis elegans.